The primary structure comprises 527 residues: Sensory neuron membrane protein 1 (527 aa).

Residues 1–10 (MQLQKPLKIG) lie on the Cytoplasmic side of the membrane. A helical membrane pass occupies residues 11-31 (LGMMGAGLFGIIFGWVLFPVI). The Extracellular segment spans residues 32 to 456 (LKSQLKKEMA…LKNQLFIPKR (425 aa)). N-linked (GlcNAc...) asparagine glycans are attached at residues asparagine 67 and asparagine 229. 3 disulfide bridges follow: cysteine 268/cysteine 333, cysteine 297/cysteine 352, and cysteine 335/cysteine 341. Residue asparagine 440 is glycosylated (N-linked (GlcNAc...) asparagine). A helical transmembrane segment spans residues 457 to 477 (IVSVVKWLLAGVGFVGLVGSL). Residues 478–527 (VYQFKGKMINFALSPSSAQVTKVNPEINQQNQPKDISIIGESQNPPKVDM) are Cytoplasmic-facing.

The protein belongs to the CD36 family. As to expression, detected in both male and female antennal tissues. Expression is two to three fold higher in male compared to female antenna.

The protein resides in the cell membrane. In terms of biological role, plays an olfactory role that is not restricted to pheromone sensitivity. In Ostrinia furnacalis (Asian corn borer), this protein is Sensory neuron membrane protein 1.